The sequence spans 387 residues: 1-hydroxy-2-naphthoate 1,2-dioxygenasee (387 aa).

Cupin type-2 domains follow at residues 103–171 (FQLV…VWLD) and 271–337 (VQRL…VLLF).

In terms of assembly, homohexamer. The cofactor is Fe(2+).

The enzyme catalyses 1-hydroxy-2-naphthoate + O2 = (3Z)-4-(2-carboxyphenyl)-2-oxobut-3-enoate + H(+). Functionally, dioxygenase involved in phenanthrene catabolism by mediating cleavage of 1-hydroxy-2-naphthoate. The sequence is that of 1-hydroxy-2-naphthoate 1,2-dioxygenasee (phdI) from Nocardioides sp. (strain KP7).